We begin with the raw amino-acid sequence, 944 residues long: Translation initiation factor IF-2 (944 aa).

Residues 61–281 (IQANQPAKNP…TAKNNKSHKI (221 aa)) are disordered. Over residues 132–150 (TFENQTPPTENTPKVVSHS) the composition is skewed to polar residues. The segment covering 151–169 (QIEKAKQKLQEIQKSREAL) has biased composition (basic and acidic residues). Positions 175-185 (SNANNASNTNN) are enriched in low complexity. A compositionally biased stretch (basic and acidic residues) spans 186 to 203 (AKKEISEVKKQEQEIKRH). A compositionally biased stretch (basic residues) spans 204-215 (ENIKRRTGFRVI). A compositionally biased stretch (basic and acidic residues) spans 244–259 (EDIKKEWQEKDKQEAK). Residues 443–612 (ERPPVVTIMG…LIQADIMELK (170 aa)) form the tr-type G domain. Residues 452–459 (GHVDHGKT) form a G1 region. 452–459 (GHVDHGKT) lines the GTP pocket. The tract at residues 477–481 (GITQH) is G2. The tract at residues 498–501 (DTPG) is G3. GTP is bound by residues 498–502 (DTPGH) and 552–555 (NKMD). Residues 552–555 (NKMD) form a G4 region. Residues 588–590 (SAK) are G5.

This sequence belongs to the TRAFAC class translation factor GTPase superfamily. Classic translation factor GTPase family. IF-2 subfamily.

The protein resides in the cytoplasm. One of the essential components for the initiation of protein synthesis. Protects formylmethionyl-tRNA from spontaneous hydrolysis and promotes its binding to the 30S ribosomal subunits. Also involved in the hydrolysis of GTP during the formation of the 70S ribosomal complex. This is Translation initiation factor IF-2 from Helicobacter pylori (strain HPAG1).